Reading from the N-terminus, the 1129-residue chain is Nuclear pore complex protein 15 (1129 aa).

Belongs to the nucleoporin Nup133 family.

The protein localises to the nucleus envelope. It is found in the nucleus. The protein resides in the nuclear pore complex. Important for early nematode development. The polypeptide is Nuclear pore complex protein 15 (Caenorhabditis elegans).